A 357-amino-acid polypeptide reads, in one-letter code: Holliday junction branch migration complex subunit RuvB (357 aa).

Residues threonine 4–tyrosine 195 form a large ATPase domain (RuvB-L) region. ATP-binding positions include leucine 34, arginine 35, glycine 76, lysine 79, threonine 80, threonine 81, glutamate 142–tyrosine 144, arginine 185, tyrosine 195, and arginine 232. Threonine 80 contributes to the Mg(2+) binding site. Residues threonine 196 to aspartate 266 form a small ATPAse domain (RuvB-S) region. The interval alanine 269–alanine 357 is head domain (RuvB-H). Residues arginine 305, arginine 324, and arginine 329 each contribute to the DNA site.

It belongs to the RuvB family. As to quaternary structure, homohexamer. Forms an RuvA(8)-RuvB(12)-Holliday junction (HJ) complex. HJ DNA is sandwiched between 2 RuvA tetramers; dsDNA enters through RuvA and exits via RuvB. An RuvB hexamer assembles on each DNA strand where it exits the tetramer. Each RuvB hexamer is contacted by two RuvA subunits (via domain III) on 2 adjacent RuvB subunits; this complex drives branch migration. In the full resolvosome a probable DNA-RuvA(4)-RuvB(12)-RuvC(2) complex forms which resolves the HJ.

The protein resides in the cytoplasm. It catalyses the reaction ATP + H2O = ADP + phosphate + H(+). Functionally, the RuvA-RuvB-RuvC complex processes Holliday junction (HJ) DNA during genetic recombination and DNA repair, while the RuvA-RuvB complex plays an important role in the rescue of blocked DNA replication forks via replication fork reversal (RFR). RuvA specifically binds to HJ cruciform DNA, conferring on it an open structure. The RuvB hexamer acts as an ATP-dependent pump, pulling dsDNA into and through the RuvAB complex. RuvB forms 2 homohexamers on either side of HJ DNA bound by 1 or 2 RuvA tetramers; 4 subunits per hexamer contact DNA at a time. Coordinated motions by a converter formed by DNA-disengaged RuvB subunits stimulates ATP hydrolysis and nucleotide exchange. Immobilization of the converter enables RuvB to convert the ATP-contained energy into a lever motion, pulling 2 nucleotides of DNA out of the RuvA tetramer per ATP hydrolyzed, thus driving DNA branch migration. The RuvB motors rotate together with the DNA substrate, which together with the progressing nucleotide cycle form the mechanistic basis for DNA recombination by continuous HJ branch migration. Branch migration allows RuvC to scan DNA until it finds its consensus sequence, where it cleaves and resolves cruciform DNA. This is Holliday junction branch migration complex subunit RuvB from Ralstonia nicotianae (strain ATCC BAA-1114 / GMI1000) (Ralstonia solanacearum).